Here is a 350-residue protein sequence, read N- to C-terminus: Histidinol-phosphate aminotransferase (350 aa).

Residue Lys209 is modified to N6-(pyridoxal phosphate)lysine.

Belongs to the class-II pyridoxal-phosphate-dependent aminotransferase family. Histidinol-phosphate aminotransferase subfamily. In terms of assembly, homodimer. The cofactor is pyridoxal 5'-phosphate.

It carries out the reaction L-histidinol phosphate + 2-oxoglutarate = 3-(imidazol-4-yl)-2-oxopropyl phosphate + L-glutamate. The protein operates within amino-acid biosynthesis; L-histidine biosynthesis; L-histidine from 5-phospho-alpha-D-ribose 1-diphosphate: step 7/9. In Citrifermentans bemidjiense (strain ATCC BAA-1014 / DSM 16622 / JCM 12645 / Bem) (Geobacter bemidjiensis), this protein is Histidinol-phosphate aminotransferase.